Here is a 1148-residue protein sequence, read N- to C-terminus: Autophagy-related protein 11 (1148 aa).

The AIM (Atg8-family-interacting motif) signature appears at 567 to 570 (FDDI). Residues 699–710 (KAEASSDVEGNK) are compositionally biased toward basic and acidic residues. 3 disordered regions span residues 699–727 (KAEA…CVSN), 754–777 (PLDS…EAGE), and 784–803 (NSST…ATGR). Composition is skewed to polar residues over residues 754–767 (PLDS…QNNE) and 784–793 (NSSTAESPQK). 2 coiled-coil regions span residues 816–868 (ELRN…HLEN) and 956–996 (DKVS…VKTL). A Phosphothreonine modification is found at threonine 851. Residues 1130-1133 (YFIV) carry the AIM (Atg8-family-interacting motif) motif.

This sequence belongs to the ATG11 family. Homodimer. Interacts with ATG8E, ATG13A and ATG101. Binds to ATG8E on autophagic vesicles.

The protein resides in the cytoplasmic vesicle. The protein localises to the autophagosome. Functionally, accessory protein involved in autophagy. Acts as a scaffold protein of the ATG1-ATG13 complex for faithful delivery of autophagic vesicles to the vacuole. Involved in the stress-induced phosphorylation of ATG1A for turnover of ATG1-ATG13 complex and proper ATG1-ATG13 complex assembly or activity. Required for selective mitophagy. Required for senescence-induced breakdown of mitochondria-resident proteins and mitochondrial vesicles. Seems not essential for ATG8-mediated autophagy. The sequence is that of Autophagy-related protein 11 from Arabidopsis thaliana (Mouse-ear cress).